Reading from the N-terminus, the 89-residue chain is Elongation factor 1-beta (89 aa).

This sequence belongs to the EF-1-beta/EF-1-delta family.

Promotes the exchange of GDP for GTP in EF-1-alpha/GDP, thus allowing the regeneration of EF-1-alpha/GTP that could then be used to form the ternary complex EF-1-alpha/GTP/AAtRNA. In Methanosarcina barkeri (strain Fusaro / DSM 804), this protein is Elongation factor 1-beta.